Reading from the N-terminus, the 380-residue chain is Cytochrome b (380 aa).

4 helical membrane-spanning segments follow: residues 33–53 (FGSL…FLAM), 77–98 (WLIR…FIHV), 113–133 (WNIG…GYVL), and 178–198 (FFAF…VHLL). Heme b contacts are provided by His83 and His97. Residues His182 and His196 each contribute to the heme b site. His201 contributes to the a ubiquinone binding site. Transmembrane regions (helical) follow at residues 226-246 (IKDL…VLFF), 288-308 (LGGV…PLLN), 320-340 (ITQA…WIGG), and 347-367 (FTLI…IFMP).

Belongs to the cytochrome b family. The cytochrome bc1 complex contains 11 subunits: 3 respiratory subunits (MT-CYB, CYC1 and UQCRFS1), 2 core proteins (UQCRC1 and UQCRC2) and 6 low-molecular weight proteins (UQCRH/QCR6, UQCRB/QCR7, UQCRQ/QCR8, UQCR10/QCR9, UQCR11/QCR10 and a cleavage product of UQCRFS1). This cytochrome bc1 complex then forms a dimer. It depends on heme b as a cofactor.

It is found in the mitochondrion inner membrane. Functionally, component of the ubiquinol-cytochrome c reductase complex (complex III or cytochrome b-c1 complex) that is part of the mitochondrial respiratory chain. The b-c1 complex mediates electron transfer from ubiquinol to cytochrome c. Contributes to the generation of a proton gradient across the mitochondrial membrane that is then used for ATP synthesis. The protein is Cytochrome b (MT-CYB) of Rhipidomys wetzeli (Wetzel's climbing mouse).